Reading from the N-terminus, the 378-residue chain is Dof zinc finger protein 1 (378 aa).

The span at G28–P38 shows a compositional bias: low complexity. The interval G28–N79 is disordered. Gly residues predominate over residues A45–A63. The segment covering T66–A77 has biased composition (basic and acidic residues). The Dof-type zinc finger occupies L78–R132. Positions 80, 83, 105, and 108 each coordinate Zn(2+). 3 disordered regions span residues G116–A148, S203–G222, and L316–W378. Positions S133–A148 are enriched in low complexity. 3 stretches are compositionally biased toward gly residues: residues G323–G338, A350–D361, and M369–W378.

It localises to the nucleus. Transcription factor that may transactivate seed storage protein genes in developing seeds. This Oryza sativa subsp. japonica (Rice) protein is Dof zinc finger protein 1.